The following is a 347-amino-acid chain: tRNA N6-adenosine threonylcarbamoyltransferase (347 aa).

2 residues coordinate Fe cation: histidine 115 and histidine 119. Residues 138–142, aspartate 171, glycine 184, and asparagine 277 contribute to the substrate site; that span reads LVSGG. Residue aspartate 305 coordinates Fe cation.

It belongs to the KAE1 / TsaD family. Fe(2+) is required as a cofactor.

It is found in the cytoplasm. The enzyme catalyses L-threonylcarbamoyladenylate + adenosine(37) in tRNA = N(6)-L-threonylcarbamoyladenosine(37) in tRNA + AMP + H(+). In terms of biological role, required for the formation of a threonylcarbamoyl group on adenosine at position 37 (t(6)A37) in tRNAs that read codons beginning with adenine. Is involved in the transfer of the threonylcarbamoyl moiety of threonylcarbamoyl-AMP (TC-AMP) to the N6 group of A37, together with TsaE and TsaB. TsaD likely plays a direct catalytic role in this reaction. This Polaromonas sp. (strain JS666 / ATCC BAA-500) protein is tRNA N6-adenosine threonylcarbamoyltransferase.